Here is a 502-residue protein sequence, read N- to C-terminus: ATP synthase subunit alpha (502 aa).

Position 169–176 (169–176 (GDRQTGKT)) interacts with ATP.

It belongs to the ATPase alpha/beta chains family. F-type ATPases have 2 components, CF(1) - the catalytic core - and CF(0) - the membrane proton channel. CF(1) has five subunits: alpha(3), beta(3), gamma(1), delta(1), epsilon(1). CF(0) has three main subunits: a(1), b(2) and c(9-12). The alpha and beta chains form an alternating ring which encloses part of the gamma chain. CF(1) is attached to CF(0) by a central stalk formed by the gamma and epsilon chains, while a peripheral stalk is formed by the delta and b chains.

It is found in the cell membrane. The catalysed reaction is ATP + H2O + 4 H(+)(in) = ADP + phosphate + 5 H(+)(out). Functionally, produces ATP from ADP in the presence of a proton gradient across the membrane. The alpha chain is a regulatory subunit. This chain is ATP synthase subunit alpha, found in Exiguobacterium sp. (strain ATCC BAA-1283 / AT1b).